The chain runs to 93 residues: MAKEELIQFEGLVTEILPDARYRVQLDAGHEIVAYTAGKMKKNRIKTLAGDRVTIEMSPYDLEKGRLIFRHKDERPGGPPRSGPPRGGQFRRR.

The S1-like domain occupies 1–72; sequence MAKEELIQFE…EKGRLIFRHK (72 aa). The segment at 70–93 is disordered; that stretch reads RHKDERPGGPPRSGPPRGGQFRRR.

This sequence belongs to the IF-1 family. Component of the 30S ribosomal translation pre-initiation complex which assembles on the 30S ribosome in the order IF-2 and IF-3, IF-1 and N-formylmethionyl-tRNA(fMet); mRNA recruitment can occur at any time during PIC assembly.

Its subcellular location is the cytoplasm. Its function is as follows. One of the essential components for the initiation of protein synthesis. Stabilizes the binding of IF-2 and IF-3 on the 30S subunit to which N-formylmethionyl-tRNA(fMet) subsequently binds. Helps modulate mRNA selection, yielding the 30S pre-initiation complex (PIC). Upon addition of the 50S ribosomal subunit IF-1, IF-2 and IF-3 are released leaving the mature 70S translation initiation complex. This is Translation initiation factor IF-1 from Nitrobacter winogradskyi (strain ATCC 25391 / DSM 10237 / CIP 104748 / NCIMB 11846 / Nb-255).